A 79-amino-acid chain; its full sequence is Cytochrome c-551 (79 aa).

Over residues 1–14 (DGQSIYESGTSPTC) the composition is skewed to polar residues. The segment at 1–35 (DGQSIYESGTSPTCASCHDRGTAGAPKINEPGDWD) is disordered. Residues cysteine 14, cysteine 17, histidine 18, and methionine 55 each contribute to the heme c site.

Binds 1 heme c group covalently per subunit.

The protein is Cytochrome c-551 of Halorhodospira halochloris (Ectothiorhodospira halochloris).